The primary structure comprises 473 residues: Photosystem II CP43 reaction center protein (473 aa).

Residues 1-14 constitute a propeptide that is removed on maturation; the sequence is MKTLYSLRRFYPVE. Threonine 15 is modified (N-acetylthreonine). A Phosphothreonine modification is found at threonine 15. The next 5 membrane-spanning stretches (helical) occupy residues 69-93, 134-155, 178-200, 255-275, and 291-312; these read LFEVAHFVPEKPMYEQGLILLPHLA, LLGPETLEESFPFFGYVWKDRN, KALYFGGVYDTWAPGGGDVRKIT, KPFAWARRALVWSGEAYLSYS, and WFNNTAYPSEFYGPTGPEASQA. Glutamate 367 is a [CaMn4O5] cluster binding site. Residues 447–471 form a helical membrane-spanning segment; that stretch reads RARAAAAGFEKGIDRDFEPVLSMTP.

It belongs to the PsbB/PsbC family. PsbC subfamily. In terms of assembly, PSII is composed of 1 copy each of membrane proteins PsbA, PsbB, PsbC, PsbD, PsbE, PsbF, PsbH, PsbI, PsbJ, PsbK, PsbL, PsbM, PsbT, PsbX, PsbY, PsbZ, Psb30/Ycf12, at least 3 peripheral proteins of the oxygen-evolving complex and a large number of cofactors. It forms dimeric complexes. Requires Binds multiple chlorophylls and provides some of the ligands for the Ca-4Mn-5O cluster of the oxygen-evolving complex. It may also provide a ligand for a Cl- that is required for oxygen evolution. PSII binds additional chlorophylls, carotenoids and specific lipids. as cofactor.

It localises to the plastid. It is found in the chloroplast thylakoid membrane. In terms of biological role, one of the components of the core complex of photosystem II (PSII). It binds chlorophyll and helps catalyze the primary light-induced photochemical processes of PSII. PSII is a light-driven water:plastoquinone oxidoreductase, using light energy to abstract electrons from H(2)O, generating O(2) and a proton gradient subsequently used for ATP formation. The chain is Photosystem II CP43 reaction center protein from Morus indica (Mulberry).